Here is an 85-residue protein sequence, read N- to C-terminus: Large ribosomal subunit protein bL27 (85 aa).

Positions 1-20 are disordered; it reads MAHKKAGGSTRNGRDSEAKR.

It belongs to the bacterial ribosomal protein bL27 family.

The polypeptide is Large ribosomal subunit protein bL27 (Citrobacter koseri (strain ATCC BAA-895 / CDC 4225-83 / SGSC4696)).